Here is a 362-residue protein sequence, read N- to C-terminus: Alpha-tubulin N-acetyltransferase (362 aa).

Residues 1-177 (MQFGCNVAEA…NNFLMLDASI (177 aa)) form the N-acetyltransferase domain. Acetyl-CoA contacts are provided by residues 111–124 (FYTHETVQRRGIGT) and 147–156 (SPKLLAFLSK).

The protein belongs to the acetyltransferase ATAT1 family.

The catalysed reaction is L-lysyl-[alpha-tubulin] + acetyl-CoA = N(6)-acetyl-L-lysyl-[alpha-tubulin] + CoA + H(+). In terms of biological role, specifically acetylates 'Lys-40' in alpha-tubulin on the lumenal side of microtubules. Promotes microtubule destabilization and accelerates microtubule dynamics; this activity may be independent of acetylation activity. Acetylates alpha-tubulin with a slow enzymatic rate, due to a catalytic site that is not optimized for acetyl transfer. Enters the microtubule through each end and diffuses quickly throughout the lumen of microtubules. Acetylates only long/old microtubules because of its slow acetylation rate since it does not have time to act on dynamically unstable microtubules before the enzyme is released. The polypeptide is Alpha-tubulin N-acetyltransferase (Giardia intestinalis (strain ATCC 50803 / WB clone C6) (Giardia lamblia)).